Here is a 1261-residue protein sequence, read N- to C-terminus: MKKRGFYNLKHPFDPCPFEFFCSGTWKPVEYMRIEDGMMTIRLLENGYVLEDIRPFQRLRLRSRKAALSDCICFLRPDIDVCVLYRIHEDDLEPVWVDARIVSIERKPHESECSCKINVRIYIDQGCIGSEKQRINRDSVVIGLNQISILQKFYKEQSTDQFYRWRFSEDCTSLMKTRLSLGKFLPDLSWLTVTSTLKSIVFQIRTVQTKMVYQIVTDEEGSSSTLSSMNITLEDGVSLSKVVKFNPADILDDSQDLEIKQETDYYQEEDEVVELRRSKRRNVRPDIYTGCDYEPDTIDGWVRMMPYQFGKCAVNVESDEDEDDNNEDGDTNDDLYIPLSRLFIKKKKTNSREAKPKSRKGEIVVIDKRRVHGFGRKERKSELSVIPFTPVFEPIPLEQFGLNANSFGGGGSFSRSQYFDETEKYRSKGMKYGKKMTEMEEMMEADLCWKGPNQVKSFQKRTSRSSRSVAPKTEDSDEPRVYKKVTLSAGAYNKLIDTYMNNIESTIAAKDEPTSVVDQWEELKKTNFAFKLHGDMEKNLSEDGEGETSENEMLWREMELCLASSYILDDNEVRVDNEAFEKARSGCEHDYRLEEEIGMCCRLCGHVGSEIKDVSAPFAEHKKWTIETKHIEEDDIKTKLSHKEAQTKDFSMISDSSEMLAAEESDNVWALIPKLKRKLHVHQRRAFEFLWRNVAGSVEPSLMDPTSGNIGGCVISHSPGAGKTFLIIAFLTSYLKLFPGKRPLVLAPKTTLYTWYKEFIKWEIPVPVHLIHGRRTYCTFKQNKTVQFNGVPKPSRDVMHVLDCLEKIQKWHAHPSVLVMGYTSFTTLMREDSKFAHRKYMAKVLRESPGLLVLDEGHNPRSTKSRLRKALMKVGTDLRILLSGTLFQNNFCEYFNTLCLARPKFIHEVLMELDQKFKTNHGVNKAPHLLENRARKLFLDIIAKKIDASVGDERLQGLNMLKNMTNGFIDNYEGSGSGSGDALPGLQIYTLVMNSTDIQHKILTKLQDVIKTYFGYPLEVELQITLAAIHPWLVTSSNCCTKFFNPQELSEIGKLKHDAKKGSKVMFVLNLIFRVVKREKILIFCHNIAPIRMFTELFENIFRWQRGREILTLTGDLELFERGRVIDKFEEPGNPSRVLLASITACAEGISLTAASRVIMLDSEWNPSKTKQAIARAFRPGQQKVVYVYQLLSRGTLEEDKYRRTTWKEWVSCMIFSEEFVADPSLWQAEKIEDDILREIVGEDKVKSFHMIMKNEKASTG.

The interval 458 to 479 (FQKRTSRSSRSVAPKTEDSDEP) is disordered. A Helicase ATP-binding domain is found at 704-904 (DPTSGNIGGC…FNTLCLARPK (201 aa)). 717-724 (HSPGAGKT) is an ATP binding site. Residues 855–858 (DEGH) carry the DEAH box motif. In terms of domain architecture, Helicase C-terminal spans 1067 to 1232 (FVLNLIFRVV…DPSLWQAEKI (166 aa)).

This sequence belongs to the helicase family. In terms of assembly, interacts with NRPD1 and SHH1.

Its subcellular location is the nucleus. Functionally, probable chromatin remodeling factor. The polypeptide is SNF2 domain-containing protein CLASSY 2 (CLSY2) (Arabidopsis thaliana (Mouse-ear cress)).